Here is a 946-residue protein sequence, read N- to C-terminus: Rho GTPase-activating protein 4 (946 aa).

Residues 19–317 (TQVKEMRWQL…AVEALDPPGD (299 aa)) form the F-BAR domain. Positions 128 to 195 (LAQRLSHIAE…REAERQEEKR (68 aa)) form a coiled coil. The span at 187–196 (EAERQEEKRA) shows a compositional bias: basic and acidic residues. Disordered regions lie at residues 187-220 (EAER…SLKK) and 402-435 (LDSF…QQQE). Composition is skewed to low complexity over residues 202-211 (TTTAGATEAG) and 407-419 (TSPS…STSS). One can recognise a Rho-GAP domain in the interval 507–695 (GDMEKFIQSS…TLIVQPDRVF (189 aa)). Residues 746–805 (EGVVEAVACFAYTGRTAQELSFRRGDVLRLHERASSDWWRGEHNGMRGLIPHKYITLPAG) enclose the SH3 domain. Phosphoserine occurs at positions 860, 901, and 906. A disordered region spans residues 885–946 (KTSVRQGLGP…QGLDTTPKPH (62 aa)). Pro residues predominate over residues 901-910 (SPGPRSPKAP). Residues 924 to 934 (GPGAPASPSAS) show a composition bias toward low complexity.

In terms of assembly, interacts with NCKAP1L. As to expression, predominantly in hematopoietic cells (spleen, thymus and leukocytes); low levels in placenta, lung and various fetal tissues.

It localises to the cytoplasm. Inhibitory effect on stress fiber organization. May down-regulate Rho-like GTPase in hematopoietic cells. The chain is Rho GTPase-activating protein 4 from Homo sapiens (Human).